The chain runs to 107 residues: ESAT-6-like protein EsxD (107 aa).

Belongs to the WXG100 family. CFP-10 subfamily.

It localises to the secreted. The chain is ESAT-6-like protein EsxD from Mycobacterium tuberculosis (strain ATCC 25618 / H37Rv).